Reading from the N-terminus, the 245-residue chain is 8-amino-3,8-dideoxy-manno-octulosonate cytidylyltransferase (245 aa).

This sequence belongs to the KdsB family.

Its subcellular location is the cytoplasm. The enzyme catalyses 8-amino-3,8-dideoxy-alpha-D-manno-octulosonate + CTP = CMP-8-amino-3,8-dideoxy-alpha-D-manno-oct-2-ulosonate + diphosphate. It functions in the pathway bacterial outer membrane biogenesis; lipopolysaccharide biosynthesis. Activates KDO8N (a required 8-carbon sugar) for incorporation into bacterial lipopolysaccharide in the Shewanella genus. The sequence is that of 8-amino-3,8-dideoxy-manno-octulosonate cytidylyltransferase from Shewanella halifaxensis (strain HAW-EB4).